Here is a 465-residue protein sequence, read N- to C-terminus: GTPase Der (465 aa).

2 EngA-type G domains span residues 3 to 166 (FLVA…LNEY) and 184 to 358 (IHFS…ACAN). Residues 9–16 (GRANVGKS), 56–60 (DTGGI), 118–121 (NKVD), 190–197 (GRPNVGKS), 237–241 (DTAGV), and 302–305 (NKWD) contribute to the GTP site. Residues 359-443 (KKITTADATC…PIVFEFKQSE (85 aa)) form the KH-like domain. The tract at residues 446–465 (FADRKNKRSKDEGSKSKKVK) is disordered.

The protein belongs to the TRAFAC class TrmE-Era-EngA-EngB-Septin-like GTPase superfamily. EngA (Der) GTPase family. In terms of assembly, associates with the 50S ribosomal subunit.

Functionally, GTPase that plays an essential role in the late steps of ribosome biogenesis. The polypeptide is GTPase Der (Francisella tularensis subsp. mediasiatica (strain FSC147)).